We begin with the raw amino-acid sequence, 259 residues long: 3-deoxy-manno-octulosonate cytidylyltransferase (259 aa).

It belongs to the KdsB family.

The protein localises to the cytoplasm. It carries out the reaction 3-deoxy-alpha-D-manno-oct-2-ulosonate + CTP = CMP-3-deoxy-beta-D-manno-octulosonate + diphosphate. It functions in the pathway nucleotide-sugar biosynthesis; CMP-3-deoxy-D-manno-octulosonate biosynthesis; CMP-3-deoxy-D-manno-octulosonate from 3-deoxy-D-manno-octulosonate and CTP: step 1/1. Its pathway is bacterial outer membrane biogenesis; lipopolysaccharide biosynthesis. In terms of biological role, activates KDO (a required 8-carbon sugar) for incorporation into bacterial lipopolysaccharide in Gram-negative bacteria. In Xanthomonas euvesicatoria pv. vesicatoria (strain 85-10) (Xanthomonas campestris pv. vesicatoria), this protein is 3-deoxy-manno-octulosonate cytidylyltransferase.